Consider the following 1153-residue polypeptide: Otoancorin (1153 aa).

An N-terminal signal peptide occupies residues 1-22 (MSQEPTTYSLFLFLFLSHGVSS). Asn156 is a glycosylation site (N-linked (GlcNAc...) asparagine). N-linked (GlcNAc...) (complex) asparagine glycosylation occurs at Asn211. N-linked (GlcNAc...) asparagine glycosylation is found at Asn244, Asn289, Asn321, Asn394, Asn398, Asn460, Asn544, Asn812, Asn911, and Asn974. The interval 1109–1128 (HSWQDAPASAGPTRTSSSRS) is disordered. The GPI-anchor amidated alanine moiety is linked to residue Ala1130. Residues 1131 to 1153 (GALQSWGLWLGCPLLVLMAKLLW) constitute a propeptide, removed in mature form.

This sequence belongs to the stereocilin family.

It localises to the apical cell membrane. It is found in the secreted. Its subcellular location is the extracellular space. The protein resides in the extracellular matrix. Its function is as follows. May act as an adhesion molecule. The sequence is that of Otoancorin (OTOA) from Homo sapiens (Human).